The following is a 212-amino-acid chain: Deoxyribose-phosphate aldolase (212 aa).

D89 acts as the Proton donor/acceptor in catalysis. The Schiff-base intermediate with acetaldehyde role is filled by K151. K180 (proton donor/acceptor) is an active-site residue.

This sequence belongs to the DeoC/FbaB aldolase family. DeoC type 1 subfamily.

Its subcellular location is the cytoplasm. The catalysed reaction is 2-deoxy-D-ribose 5-phosphate = D-glyceraldehyde 3-phosphate + acetaldehyde. It functions in the pathway carbohydrate degradation; 2-deoxy-D-ribose 1-phosphate degradation; D-glyceraldehyde 3-phosphate and acetaldehyde from 2-deoxy-alpha-D-ribose 1-phosphate: step 2/2. In terms of biological role, catalyzes a reversible aldol reaction between acetaldehyde and D-glyceraldehyde 3-phosphate to generate 2-deoxy-D-ribose 5-phosphate. This is Deoxyribose-phosphate aldolase from Clostridium botulinum (strain Langeland / NCTC 10281 / Type F).